A 391-amino-acid polypeptide reads, in one-letter code: Tryptophan synthase beta chain (391 aa).

K84 carries the post-translational modification N6-(pyridoxal phosphate)lysine.

The protein belongs to the TrpB family. Tetramer of two alpha and two beta chains. Pyridoxal 5'-phosphate serves as cofactor.

The enzyme catalyses (1S,2R)-1-C-(indol-3-yl)glycerol 3-phosphate + L-serine = D-glyceraldehyde 3-phosphate + L-tryptophan + H2O. Its pathway is amino-acid biosynthesis; L-tryptophan biosynthesis; L-tryptophan from chorismate: step 5/5. Functionally, the beta subunit is responsible for the synthesis of L-tryptophan from indole and L-serine. This Thermoanaerobacter sp. (strain X514) protein is Tryptophan synthase beta chain.